The primary structure comprises 330 residues: Tetraacyldisaccharide 4'-kinase (330 aa).

Residue 58–65 (TVGGSGKT) participates in ATP binding.

Belongs to the LpxK family.

The enzyme catalyses a lipid A disaccharide + ATP = a lipid IVA + ADP + H(+). It functions in the pathway glycolipid biosynthesis; lipid IV(A) biosynthesis; lipid IV(A) from (3R)-3-hydroxytetradecanoyl-[acyl-carrier-protein] and UDP-N-acetyl-alpha-D-glucosamine: step 6/6. In terms of biological role, transfers the gamma-phosphate of ATP to the 4'-position of a tetraacyldisaccharide 1-phosphate intermediate (termed DS-1-P) to form tetraacyldisaccharide 1,4'-bis-phosphate (lipid IVA). The sequence is that of Tetraacyldisaccharide 4'-kinase from Shewanella halifaxensis (strain HAW-EB4).